Here is a 452-residue protein sequence, read N- to C-terminus: Trigger factor (452 aa).

The 86-residue stretch at 171-256 (GDRVTISFKG…ATKVEAPQDT (86 aa)) folds into the PPIase FKBP-type domain.

It belongs to the FKBP-type PPIase family. Tig subfamily.

Its subcellular location is the cytoplasm. The enzyme catalyses [protein]-peptidylproline (omega=180) = [protein]-peptidylproline (omega=0). Its function is as follows. Involved in protein export. Acts as a chaperone by maintaining the newly synthesized protein in an open conformation. Functions as a peptidyl-prolyl cis-trans isomerase. This chain is Trigger factor, found in Rhodopseudomonas palustris (strain HaA2).